Consider the following 1377-residue polypeptide: Endoribonuclease Dicer homolog 2b (1377 aa).

A compositionally biased stretch (gly residues) spans 1–15 (MGGPLTAAGGRGDGG). Positions 1-30 (MGGPLTAAGGRGDGGAKAVEPLRPPPPPDP) are disordered. The 182-residue stretch at 41–222 (ALERAVRGNT…HNYSKQISEI (182 aa)) folds into the Helicase ATP-binding domain. An ATP-binding site is contributed by 54 to 61 (LETGSGKT). The short motif at 163-166 (DECH) is the DECH box element. Residues 388–561 (TLLQYRHMQD…DTYYRVESTP (174 aa)) form the Helicase C-terminal domain. The 93-residue stretch at 534-626 (SLRLGSISCQ…LPELDVPCDE (93 aa)) folds into the Dicer dsRNA-binding fold domain. The PAZ domain maps to 798 to 913 (RDIDLLQTKD…LPPELCRIIM (116 aa)). RNase III domains lie at 940–1095 (SVKL…STAG) and 1132–1276 (VRSL…LDSK). Mg(2+) contacts are provided by glutamate 1171, aspartate 1262, and glutamate 1265. Positions 1302 to 1367 (DPVKGLQEFC…SKAVLKDLIA (66 aa)) constitute a DRBM domain.

Belongs to the helicase family. Dicer subfamily. May interact with ARGONAUTE1 or PINHEAD through their common PAZ domains. Requires Mg(2+) as cofactor. The cofactor is Mn(2+).

It is found in the nucleus. Probably involved in the RNA silencing pathway. May cleave double-stranded RNA to produce short 21-24 nucleotides (nt) RNAs which target the selective destruction of complementary RNAs. In Oryza sativa subsp. japonica (Rice), this protein is Endoribonuclease Dicer homolog 2b (DCL2B).